Here is a 395-residue protein sequence, read N- to C-terminus: uncharacterized protein (395 aa).

Residues 1-18 (MKHVIMLYFIAAATLFSS) form the signal peptide. Cys-19 carries the N-palmitoyl cysteine lipid modification. A lipid anchor (S-diacylglycerol cysteine) is attached at Cys-19.

The protein localises to the cell outer membrane. Functionally, may be involved in ulvan degradation. Ulvan is the main polysaccharide component of the Ulvales (green seaweed) cell wall. It is composed of disaccharide building blocks comprising 3-sulfated rhamnose (Rha3S) linked to D-glucuronic acid (GlcA), L-iduronic acid (IduA), or D-xylose (Xyl). This is an uncharacterized protein from Formosa agariphila (strain DSM 15362 / KCTC 12365 / LMG 23005 / KMM 3901 / M-2Alg 35-1).